Here is a 912-residue protein sequence, read N- to C-terminus: Translation initiation factor IF-2 (912 aa).

The disordered stretch occupies residues 185 to 204 (NATRPKRKTKEEKQKEREER). Basic and acidic residues predominate over residues 193 to 204 (TKEEKQKEREER). One can recognise a tr-type G domain in the interval 411–581 (LRPPIVTIMG…LLEAELLDLK (171 aa)). The segment at 420-427 (GHVDHGKT) is G1. 420–427 (GHVDHGKT) contacts GTP. The segment at 445 to 449 (GITQH) is G2. The interval 467–470 (DTPG) is G3. GTP-binding positions include 467-471 (DTPGH) and 521-524 (NKID). The interval 521 to 524 (NKID) is G4. The interval 557 to 559 (SAK) is G5.

This sequence belongs to the TRAFAC class translation factor GTPase superfamily. Classic translation factor GTPase family. IF-2 subfamily.

The protein localises to the cytoplasm. In terms of biological role, one of the essential components for the initiation of protein synthesis. Protects formylmethionyl-tRNA from spontaneous hydrolysis and promotes its binding to the 30S ribosomal subunits. Also involved in the hydrolysis of GTP during the formation of the 70S ribosomal complex. The chain is Translation initiation factor IF-2 from Azobacteroides pseudotrichonymphae genomovar. CFP2.